A 591-amino-acid polypeptide reads, in one-letter code: Potassium-transporting ATPase potassium-binding subunit (591 aa).

Transmembrane regions (helical) follow at residues 6–26, 63–83, 137–157, 179–199, 272–292, 303–323, 405–425, 444–464, 510–530, and 553–573; these read WFQI…LGVF, WTEY…MLYI, GLAY…IAFI, VLWV…SQGV, LSNL…TYTL, WAVW…VYWA, AGMY…GLMV, AMLV…ISSV, VAIG…MLAI, and LFSV…FFPA.

It belongs to the KdpA family. As to quaternary structure, the system is composed of three essential subunits: KdpA, KdpB and KdpC.

Its subcellular location is the cell inner membrane. Part of the high-affinity ATP-driven potassium transport (or Kdp) system, which catalyzes the hydrolysis of ATP coupled with the electrogenic transport of potassium into the cytoplasm. This subunit binds the periplasmic potassium ions and delivers the ions to the membrane domain of KdpB through an intramembrane tunnel. This Koribacter versatilis (strain Ellin345) protein is Potassium-transporting ATPase potassium-binding subunit.